We begin with the raw amino-acid sequence, 88 residues long: Small ribosomal subunit protein bS20 (88 aa).

Residues 1–21 (MANSKSAKKRALQSEKRRQHN) are compositionally biased toward basic residues. A disordered region spans residues 1–26 (MANSKSAKKRALQSEKRRQHNASRSS).

This sequence belongs to the bacterial ribosomal protein bS20 family.

In terms of biological role, binds directly to 16S ribosomal RNA. This is Small ribosomal subunit protein bS20 from Shewanella halifaxensis (strain HAW-EB4).